Reading from the N-terminus, the 424-residue chain is 3-isopropylmalate dehydratase large subunit 1 (424 aa).

Residues cysteine 303, cysteine 363, and cysteine 366 each coordinate [4Fe-4S] cluster.

It belongs to the aconitase/IPM isomerase family. LeuC type 2 subfamily. As to quaternary structure, heterodimer of LeuC and LeuD. The cofactor is [4Fe-4S] cluster.

It carries out the reaction (2R,3S)-3-isopropylmalate = (2S)-2-isopropylmalate. It participates in amino-acid biosynthesis; L-leucine biosynthesis; L-leucine from 3-methyl-2-oxobutanoate: step 2/4. Its function is as follows. Catalyzes the isomerization between 2-isopropylmalate and 3-isopropylmalate, via the formation of 2-isopropylmaleate. This Pyrococcus furiosus (strain ATCC 43587 / DSM 3638 / JCM 8422 / Vc1) protein is 3-isopropylmalate dehydratase large subunit 1.